Reading from the N-terminus, the 197-residue chain is 7-methyl-GTP pyrophosphatase (197 aa).

Asp69 functions as the Proton acceptor in the catalytic mechanism.

The protein belongs to the Maf family. YceF subfamily. It depends on a divalent metal cation as a cofactor.

It localises to the cytoplasm. The enzyme catalyses N(7)-methyl-GTP + H2O = N(7)-methyl-GMP + diphosphate + H(+). In terms of biological role, nucleoside triphosphate pyrophosphatase that hydrolyzes 7-methyl-GTP (m(7)GTP). May have a dual role in cell division arrest and in preventing the incorporation of modified nucleotides into cellular nucleic acids. The sequence is that of 7-methyl-GTP pyrophosphatase from Syntrophotalea carbinolica (strain DSM 2380 / NBRC 103641 / GraBd1) (Pelobacter carbinolicus).